Consider the following 104-residue polypeptide: Large ribosomal subunit protein bL21 (104 aa).

Belongs to the bacterial ribosomal protein bL21 family. In terms of assembly, part of the 50S ribosomal subunit. Contacts protein L20.

Functionally, this protein binds to 23S rRNA in the presence of protein L20. In Helicobacter hepaticus (strain ATCC 51449 / 3B1), this protein is Large ribosomal subunit protein bL21.